Here is a 295-residue protein sequence, read N- to C-terminus: MGPYLSQPKTEKSTVTGQNQVFQYAATHMQGWRNTMEDAHISDMNIEPDVHLFAVFDGHGGSEVAIFAERHFREELMKNKNYQQKNYEKALTETFFKIDKMLQEPSGQDELNKIRGVNDETSLAGCTANVALIVGKTLYVANAGDSRSFLNRDGKPFDMSKDHKPDDDQEKKRIERAGGFVSDGRANGNLSLSRALGDLEYKKDSRFKPEEQIISALPDVKVTQLTASDKFLLMGCDGVFETWDHQQILNFVNQELKSSQNLQKATEKLLDQLLAKDTSLGTGCDNMTCILVLFK.

Residues 23–294 enclose the PPM-type phosphatase domain; sequence QYAATHMQGW…DNMTCILVLF (272 aa). Residues D57 and G58 each coordinate Mn(2+). The disordered stretch occupies residues 151–170; the sequence is NRDGKPFDMSKDHKPDDDQE. D237 and D285 together coordinate Mn(2+).

The protein belongs to the PP2C family. Mg(2+) is required as a cofactor. It depends on Mn(2+) as a cofactor.

The protein localises to the membrane. It catalyses the reaction O-phospho-L-seryl-[protein] + H2O = L-seryl-[protein] + phosphate. The enzyme catalyses O-phospho-L-threonyl-[protein] + H2O = L-threonyl-[protein] + phosphate. Functionally, enzyme with a broad specificity. This Paramecium tetraurelia protein is Probable protein phosphatase 2C 5.